Consider the following 218-residue polypeptide: Ras-related protein Rab-4A (218 aa).

Residues G23, T24, G25, K26, S27, C28, S42, H44, and T45 each coordinate GTP. Residue S27 participates in Mg(2+) binding. A Switch 1 motif is present at residues 44–49 (HTIGVE). Mg(2+) contacts are provided by T45 and D68. A Switch 2 motif is present at residues 70–79 (AGQERFRSVT). G71 lines the GTP pocket. Q72 is subject to 5-glutamyl serotonin. Positions 126, 127, 129, 157, and 158 each coordinate GTP. S190 carries the phosphoserine modification. Phosphoserine; by CDK1 is present on S204. Residues C216 and C218 are each lipidated (S-geranylgeranyl cysteine). Position 218 is a cysteine methyl ester (C218).

It belongs to the small GTPase superfamily. Rab family. Interacts with SGSM1, SGSM2 and SGSM3. Interacts with RAB11FIP1, RABEP1, ZFYVE20 and RUFY1. Interacts (membrane-bound form) with NDRG1; the interaction involves NDRG1 in vesicular recycling of E-cadherin. Interacts (in GTP-bound form) with GRIPAP1 (via N-terminus). Interacts with RABEP1 and RBSN. Does not interact with HPS4. Does not interact with HPS4. Interacts with RABEP2; this interaction may mediate VEGFR2 cell surface expression. Mg(2+) is required as a cofactor. Serotonylation of Gln-72 by TGM2 during activation and aggregation of platelets leads to constitutive activation of GTPase activity. In terms of processing, phosphorylated by CDK1 kinase during mitosis. As to expression, expressed in the central nervous system, including cortex, cerebellum, midbrain and spinal cord, and in the kidney, lung, liver and spleen.

The protein resides in the membrane. It is found in the cytoplasm. The protein localises to the early endosome membrane. Its subcellular location is the recycling endosome membrane. It catalyses the reaction GTP + H2O = GDP + phosphate + H(+). With respect to regulation, regulated by guanine nucleotide exchange factors (GEFs) which promote the exchange of bound GDP for free GTP. Regulated by GTPase activating proteins (GAPs) which increase the GTP hydrolysis activity. Inhibited by GDP dissociation inhibitors (GDIs). In terms of biological role, the small GTPases Rab are key regulators of intracellular membrane trafficking, from the formation of transport vesicles to their fusion with membranes. Rabs cycle between an inactive GDP-bound form and an active GTP-bound form that is able to recruit to membranes different sets of downstream effectors directly responsible for vesicle formation, movement, tethering and fusion. RAB4A is involved in protein transport. Also plays a role in vesicular traffic. Mediates VEGFR2 endosomal trafficking to enhance VEGFR2 signaling. Acts as a regulator of platelet alpha-granule release during activation and aggregation of platelets. The chain is Ras-related protein Rab-4A from Mus musculus (Mouse).